Reading from the N-terminus, the 1045-residue chain is Tyrosine-protein kinase-like otk (1045 aa).

The N-terminal stretch at 1-25 is a signal peptide; sequence MPIVMDMNMLLMLSLAFTVMAPASA. Ig-like C2-type domains follow at residues 26–116, 115–200, 260–373, 376–469, and 474–564; these read SSSR…AKLS, LSVI…RVMS, PEGL…APVN, PGAL…VAIN, and PRFS…VRLL. The Extracellular segment spans residues 26–587; the sequence is SSSRFTQPPQ…AGDGFLVTRA (562 aa). Cystine bridges form between Cys49–Cys97, Cys139–Cys189, Cys285–Cys362, and Cys406–Cys453. 8 N-linked (GlcNAc...) asparagine glycosylation sites follow: Asn344, Asn424, Asn435, Asn442, Asn450, Asn463, Asn518, and Asn530. An intrachain disulfide couples Cys496 to Cys548. The chain crosses the membrane as a helical span at residues 588 to 608; the sequence is VLITMTVALAYIVLVVGLMLW. At 609-1045 the chain is on the cytoplasmic side; that stretch reads CRYRRQARKA…LSKAMQAAEK (437 aa). The tract at residues 628 to 676 is disordered; sequence AGGDQAESGKNTEQEPCLSKQRNGHGKSRTAANGDAQKSDDTACSQQSK. Ser681 carries the phosphoserine modification. The region spanning 695 to 1040 is the Protein kinase; inactive domain; that stretch reads LSELIQIGRG…QLGAALSKAM (346 aa). The interval 722-790 is disordered; sequence ASPSDKDADT…QPQEQAQSES (69 aa). Basic and acidic residues predominate over residues 725 to 736; the sequence is SDKDADTEKQHS. Residues 743-752 show a composition bias toward gly residues; the sequence is GASGASGCGS. Acidic residues predominate over residues 771 to 782; that stretch reads DDIEEIKEEEQP.

The protein belongs to the protein kinase superfamily. Tyr protein kinase family. Insulin receptor subfamily. Interacts with plexA; component of a receptor complex that mediates the repulsive signaling in response to Semaphorin ligands.

The protein localises to the cell membrane. Its function is as follows. Acts as a calcium-dependent, homophilic cell adhesion molecule that regulates neural recognition during the development of the nervous system. Component of the repulsive Plexin signaling response to regulate motor axon guidance at the embryonic stage. Also component of a receptor complex that is required in the adult visual system to innervate the lamina layer; specific targeting of R1-R6 axons. This Drosophila mojavensis (Fruit fly) protein is Tyrosine-protein kinase-like otk.